Here is a 206-residue protein sequence, read N- to C-terminus: Protein SUE1, mitochondrial (206 aa).

A mitochondrion-targeting transit peptide spans 1–24 (MILLKRTKIRGVSVSFVSLQRRTH).

Its subcellular location is the mitochondrion envelope. Functionally, required for degradation of unstable forms of cytochrome c. The chain is Protein SUE1, mitochondrial from Saccharomyces cerevisiae (strain ATCC 204508 / S288c) (Baker's yeast).